The following is a 688-amino-acid chain: UvrABC system protein B (688 aa).

In terms of domain architecture, Helicase ATP-binding spans 41-429; the sequence is ANFEAGLAKQ…AGEVTELVVR (389 aa). 54-61 provides a ligand contact to ATP; sequence GVTGSGKT. The Beta-hairpin signature appears at 107-130; that stretch reads YYDYYQPEAYVPSSDTFIEKDSSI. In terms of domain architecture, Helicase C-terminal spans 446–612; that stretch reads QVDDLMSEIH…SVERPISDIM (167 aa). Positions 616 to 646 are disordered; it reads REDAAEKKSGKGRSKSRQVAEETPDYRAMKP. The segment covering 633–645 has biased composition (basic and acidic residues); sequence QVAEETPDYRAMK. The UVR domain occupies 650-685; sequence AGKLKSLEQKMYQHAKDLEFEAAAQIRDQIQKLKTA.

The protein belongs to the UvrB family. Forms a heterotetramer with UvrA during the search for lesions. Interacts with UvrC in an incision complex.

It localises to the cytoplasm. Its function is as follows. The UvrABC repair system catalyzes the recognition and processing of DNA lesions. A damage recognition complex composed of 2 UvrA and 2 UvrB subunits scans DNA for abnormalities. Upon binding of the UvrA(2)B(2) complex to a putative damaged site, the DNA wraps around one UvrB monomer. DNA wrap is dependent on ATP binding by UvrB and probably causes local melting of the DNA helix, facilitating insertion of UvrB beta-hairpin between the DNA strands. Then UvrB probes one DNA strand for the presence of a lesion. If a lesion is found the UvrA subunits dissociate and the UvrB-DNA preincision complex is formed. This complex is subsequently bound by UvrC and the second UvrB is released. If no lesion is found, the DNA wraps around the other UvrB subunit that will check the other stand for damage. The protein is UvrABC system protein B of Xanthomonas oryzae pv. oryzae (strain KACC10331 / KXO85).